We begin with the raw amino-acid sequence, 523 residues long: Cyclin-dependent kinase 17 (523 aa).

S9 is modified (phosphoserine). The tract at residues 30–55 (TIEENSSKDNEPIVKNGRPPTSHSMH) is disordered. Phosphoserine is present on residues S80, S92, and S105. The interval 103-123 (MGSDGESDQASGTSSDEVQSP) is disordered. Positions 110–123 (DQASGTSSDEVQSP) are enriched in polar residues. A phosphoserine mark is found at S137, S146, S165, and S180. Residues 192-473 (YIKLEKLGEG…AEEAMKHVYF (282 aa)) form the Protein kinase domain. Residues 198–206 (LGEGTYATV) and K221 contribute to the ATP site. D313 serves as the catalytic Proton acceptor. The interval 501-523 (PGFRNSSYPETGHGKNRRQSMLF) is disordered. A compositionally biased stretch (basic residues) spans 514-523 (GKNRRQSMLF).

This sequence belongs to the protein kinase superfamily. CMGC Ser/Thr protein kinase family. CDC2/CDKX subfamily. In terms of assembly, found in a complex containing CABLES1, CDK16 and TDRD7. Interacts with TDRD7.

The catalysed reaction is L-seryl-[protein] + ATP = O-phospho-L-seryl-[protein] + ADP + H(+). It catalyses the reaction L-threonyl-[protein] + ATP = O-phospho-L-threonyl-[protein] + ADP + H(+). Its function is as follows. May play a role in terminally differentiated neurons. Has a Ser/Thr-phosphorylating activity for histone H1. The chain is Cyclin-dependent kinase 17 (CDK17) from Homo sapiens (Human).